The primary structure comprises 215 residues: Small ribosomal subunit protein uS3 (215 aa).

The KH type-2 domain maps to 39–109 (IRKFIKKRLE…EVLVDVKEVK (71 aa)).

This sequence belongs to the universal ribosomal protein uS3 family. As to quaternary structure, part of the 30S ribosomal subunit. Forms a tight complex with proteins S10 and S14.

In terms of biological role, binds the lower part of the 30S subunit head. Binds mRNA in the 70S ribosome, positioning it for translation. In Methylacidiphilum infernorum (isolate V4) (Methylokorus infernorum (strain V4)), this protein is Small ribosomal subunit protein uS3.